Reading from the N-terminus, the 511-residue chain is Activin receptor type-2B (511 aa).

The first 20 residues, 1-20, serve as a signal peptide directing secretion; sequence MGASVALTFLLLLATFRAGS. At 21 to 136 the chain is on the extracellular side; the sequence is GHDEVETREC…KPQPSASVLN (116 aa). The cysteines at positions 30 and 61 are disulfide-linked. Residues N43 and N67 are each glycosylated (N-linked (GlcNAc...) asparagine). 3 disulfides stabilise this stretch: C86/C105, C92/C104, and C106/C111. A helical membrane pass occupies residues 137–157; it reads ILIYSLLPIVGLSMAILLAFW. Over 158 to 511 the chain is Cytoplasmic; sequence MYRHRKPSYG…VDLPPKESSI (354 aa). Positions 189 to 477 constitute a Protein kinase domain; sequence LQLLDIKARG…LSAGCVEERI (289 aa). ATP is bound by residues 195 to 203 and K216; that span reads KARGRFGCV. D320 acts as the Proton acceptor in catalysis.

The protein belongs to the protein kinase superfamily. TKL Ser/Thr protein kinase family. TGFB receptor subfamily.

It localises to the membrane. It catalyses the reaction L-threonyl-[receptor-protein] + ATP = O-phospho-L-threonyl-[receptor-protein] + ADP + H(+). It carries out the reaction L-seryl-[receptor-protein] + ATP = O-phospho-L-seryl-[receptor-protein] + ADP + H(+). Functionally, receptor for activin A, activin B and inhibin A. Involved in transmembrane signaling. In Xenopus laevis (African clawed frog), this protein is Activin receptor type-2B (acvr2b).